Here is a 159-residue protein sequence, read N- to C-terminus: NAD(P)H-quinone oxidoreductase subunit J, chloroplastic (159 aa).

This sequence belongs to the complex I 30 kDa subunit family. NDH is composed of at least 16 different subunits, 5 of which are encoded in the nucleus. In terms of tissue distribution, leaves.

The protein localises to the plastid. Its subcellular location is the chloroplast thylakoid membrane. It carries out the reaction a plastoquinone + NADH + (n+1) H(+)(in) = a plastoquinol + NAD(+) + n H(+)(out). The enzyme catalyses a plastoquinone + NADPH + (n+1) H(+)(in) = a plastoquinol + NADP(+) + n H(+)(out). In terms of biological role, NDH shuttles electrons from NAD(P)H:plastoquinone, via FMN and iron-sulfur (Fe-S) centers, to quinones in the photosynthetic chain and possibly in a chloroplast respiratory chain. The immediate electron acceptor for the enzyme in this species is believed to be plastoquinone. Couples the redox reaction to proton translocation, and thus conserves the redox energy in a proton gradient. In Zea mays (Maize), this protein is NAD(P)H-quinone oxidoreductase subunit J, chloroplastic.